Consider the following 319-residue polypeptide: Mas-related G-protein coupled receptor member D (319 aa).

Residues 1-30 (MNYTPYSSPAPGLTISPTMDPVTWVYFSVT) are Extracellular-facing. A helical transmembrane segment spans residues 31–51 (FLAMATCVCGIVGNSMVIWLL). Residues 52-64 (SFHRVQRSPFCTY) are Cytoplasmic-facing. The chain crosses the membrane as a helical span at residues 65-85 (VLNLAVADLLFLLCMASLLSL). Residues 86–92 (ETGPLLT) are Extracellular-facing. The helical transmembrane segment at 93-113 (ASTSARVYEGMKRIKYFAYTA) threads the bilayer. Topologically, residues 114–144 (GLSLLTAISTQRCLSVLFPIWYKCHRPQHLS) are cytoplasmic. The chain crosses the membrane as a helical span at residues 145-165 (GVVCGVLWALALLMNFLASFF). Residues 166 to 184 (CVQFWHPDKYQCFKVDMVF) are Extracellular-facing. The helical transmembrane segment at 185–205 (NSLILGIFMPVMVLTSAIIFI) threads the bilayer. At 206–220 (RMRKNSLLQRRQPRR) the chain is on the cytoplasmic side. Residues 221-241 (LYVVILTSVLVFLTCSLPLGI) form a helical membrane-spanning segment. Residues 242-260 (NWFLLYWVELPQAVRLLYV) are Extracellular-facing. A helical membrane pass occupies residues 261–281 (CSSRFSSSLSSSANPVIYFLV). Residues 282–319 (GSQKSHRLQESLGAVLGRALQDEPEGRETPSTCTNDGV) are Cytoplasmic-facing.

It belongs to the G-protein coupled receptor 1 family. Mas subfamily. As to expression, co-expressed in the small diameter neurons with P2X3 and VR1 in dorsal root ganglia.

Its subcellular location is the cell membrane. Functionally, may regulate nociceptor function and/or development, including the sensation or modulation of pain. Functions as a specific membrane receptor for beta-alanine. The receptor couples with G-protein G(q) and G(i). The chain is Mas-related G-protein coupled receptor member D (Mrgprd) from Rattus norvegicus (Rat).